Reading from the N-terminus, the 98-residue chain is Large ribosomal subunit protein uL23 (98 aa).

The protein belongs to the universal ribosomal protein uL23 family. As to quaternary structure, part of the 50S ribosomal subunit. Contacts protein L29, and trigger factor when it is bound to the ribosome.

Functionally, one of the early assembly proteins it binds 23S rRNA. One of the proteins that surrounds the polypeptide exit tunnel on the outside of the ribosome. Forms the main docking site for trigger factor binding to the ribosome. The protein is Large ribosomal subunit protein uL23 of Rickettsia akari (strain Hartford).